Here is a 1383-residue protein sequence, read N- to C-terminus: ATP-dependent RNA helicase TDRD9 (1383 aa).

The segment at 35-82 (EAPREEVQRSEEVPNEDPTAQAQVPVKATAPARPASTSGRSLSQRSSE) is disordered. Basic and acidic residues predominate over residues 36 to 46 (APREEVQRSEE). The span at 70-80 (STSGRSLSQRS) shows a compositional bias: low complexity. The Helicase ATP-binding domain occupies 144-310 (ISLIESNSVV…FAVPVQNKMN (167 aa)). 157 to 164 (GATGSGKS) is a binding site for ATP. Residues 256–259 (DEVH) carry the DEAH box motif. A Helicase C-terminal domain is found at 378–545 (SGAQFVSERS…ILKVKLLDMG (168 aa)). The region spanning 945–1005 (HPHPDLVCLA…REIPCQFLEL (61 aa)) is the Tudor domain.

Belongs to the DEAD box helicase family. DEAH subfamily. As to quaternary structure, interacts with piRNA-associated proteins PIWIL1 and PIWIL4. Predominantly expressed in reproductive organs. Detected in mitotic spermatogonia, meiotic spermatocytes (predominantly at the pachytene stage), haploid spermatids in the testis, and in growing oocytes in the ovary (at protein level).

It localises to the cytoplasm. It is found in the nucleus. The catalysed reaction is ATP + H2O = ADP + phosphate + H(+). Functionally, ATP-binding RNA helicase which plays a central role during spermatogenesis by repressing transposable elements and preventing their mobilization, which is essential for the germline integrity. Acts via the piRNA metabolic process, which mediates the repression of transposable elements during meiosis by forming complexes composed of piRNAs and Piwi proteins and governs the methylation and subsequent repression of transposons. Acts downstream of piRNA biogenesis: exclusively required for transposon silencing in the nucleus, suggesting that it acts as a nuclear effector in the nucleus together with PIWIL4. The polypeptide is ATP-dependent RNA helicase TDRD9 (Mus musculus (Mouse)).